The primary structure comprises 286 residues: Polyamine aminopropyltransferase (286 aa).

Positions 2–237 constitute a PABS domain; sequence DLWFSEVHTP…GYWLFGFASK (236 aa). Glutamine 31 lines the S-methyl-5'-thioadenosine pocket. A spermidine-binding site is contributed by aspartate 86. S-methyl-5'-thioadenosine contacts are provided by residues glutamate 106 and 137-138; that span reads NG. The active-site Proton acceptor is aspartate 155.

It belongs to the spermidine/spermine synthase family. As to quaternary structure, homodimer or homotetramer.

Its subcellular location is the cytoplasm. The catalysed reaction is S-adenosyl 3-(methylsulfanyl)propylamine + putrescine = S-methyl-5'-thioadenosine + spermidine + H(+). Its pathway is amine and polyamine biosynthesis; spermidine biosynthesis; spermidine from putrescine: step 1/1. Functionally, catalyzes the irreversible transfer of a propylamine group from the amino donor S-adenosylmethioninamine (decarboxy-AdoMet) to putrescine (1,4-diaminobutane) to yield spermidine. The protein is Polyamine aminopropyltransferase of Streptococcus pneumoniae serotype 4 (strain ATCC BAA-334 / TIGR4).